The following is a 570-amino-acid chain: Cytoplasmic polyadenylation element-binding protein 2 (570 aa).

Residues 434-516 form the RRM domain; the sequence is LVAFIGGVPR…KRVEIKPYFF (83 aa).

In terms of tissue distribution, expressed specifically in the spermatogenic germ line.

In terms of biological role, cytoplasmic polyadenylation element binding protein that binds to and regulates the translation of specific mRNAs. Not required for oogenesis. In Caenorhabditis elegans, this protein is Cytoplasmic polyadenylation element-binding protein 2 (cpb-2).